We begin with the raw amino-acid sequence, 146 residues long: Catabolic 3-dehydroquinase (146 aa).

Residue tyrosine 24 is the Proton acceptor of the active site. Asparagine 78, histidine 84, and aspartate 91 together coordinate substrate. Catalysis depends on histidine 104, which acts as the Proton donor. Residues 105-106 and arginine 115 contribute to the substrate site; that span reads IT.

It belongs to the type-II 3-dehydroquinase family. As to quaternary structure, homododecamer. Adopts a ring-like structure, composed of an arrangement of two hexameric rings stacked on top of one another.

The enzyme catalyses 3-dehydroquinate = 3-dehydroshikimate + H2O. It participates in aromatic compound metabolism; 3,4-dihydroxybenzoate biosynthesis; 3,4-dihydroxybenzoate from 3-dehydroquinate: step 1/2. Its function is as follows. Is involved in the catabolism of quinate. Allows the utilization of quinate as carbon source via the beta-ketoadipate pathway. The chain is Catabolic 3-dehydroquinase from Meyerozyma guilliermondii (strain ATCC 6260 / CBS 566 / DSM 6381 / JCM 1539 / NBRC 10279 / NRRL Y-324) (Yeast).